The sequence spans 205 residues: Ribosomal RNA small subunit methyltransferase G (205 aa).

Residues Gly76, Leu81, 127–128 (IE), and Arg140 each bind S-adenosyl-L-methionine.

Belongs to the methyltransferase superfamily. RNA methyltransferase RsmG family.

The protein localises to the cytoplasm. It carries out the reaction guanosine(527) in 16S rRNA + S-adenosyl-L-methionine = N(7)-methylguanosine(527) in 16S rRNA + S-adenosyl-L-homocysteine. In terms of biological role, specifically methylates the N7 position of guanine in position 527 of 16S rRNA. This Francisella tularensis subsp. tularensis (strain FSC 198) protein is Ribosomal RNA small subunit methyltransferase G.